Here is a 786-residue protein sequence, read N- to C-terminus: Kazrin-A (786 aa).

Positions 44 to 70 are disordered; sequence EEPGEPQEHQQQQQQQNHQDAPVQRQK. Low complexity predominate over residues 52–62; that stretch reads HQQQQQQQNHQ. A coiled-coil region spans residues 92-270; the sequence is LLHEEVLRLQ…SLATLTKDVP (179 aa). The interval 350–425 is disordered; it reads MSDASVMEGE…LFDDSDSLSS (76 aa). 3 consecutive SAM domains span residues 457 to 522, 535 to 599, and 623 to 686; these read WRAG…YRDA, DHHW…LHTL, and WTCQ…SEEM. Positions 703–760 are disordered; the sequence is PLGTPPTLHRQSSLSSSSPSCHDDQQSLRRVKQQLGLSPKNLTARNISHQSRSGSFPR. Positions 742-758 are enriched in polar residues; it reads KNLTARNISHQSRSGSF.

It belongs to the kazrin family.

This is Kazrin-A (kazna) from Danio rerio (Zebrafish).